We begin with the raw amino-acid sequence, 635 residues long: Glutamyl-tRNA(Gln) amidotransferase subunit E (635 aa).

A disordered region spans residues L415 to D437.

Belongs to the GatB/GatE family. GatE subfamily. As to quaternary structure, heterodimer of GatD and GatE.

The catalysed reaction is L-glutamyl-tRNA(Gln) + L-glutamine + ATP + H2O = L-glutaminyl-tRNA(Gln) + L-glutamate + ADP + phosphate + H(+). Its function is as follows. Allows the formation of correctly charged Gln-tRNA(Gln) through the transamidation of misacylated Glu-tRNA(Gln) in organisms which lack glutaminyl-tRNA synthetase. The reaction takes place in the presence of glutamine and ATP through an activated gamma-phospho-Glu-tRNA(Gln). The GatDE system is specific for glutamate and does not act on aspartate. The protein is Glutamyl-tRNA(Gln) amidotransferase subunit E of Pyrococcus horikoshii (strain ATCC 700860 / DSM 12428 / JCM 9974 / NBRC 100139 / OT-3).